Here is a 324-residue protein sequence, read N- to C-terminus: NADH-ubiquinone oxidoreductase chain 1 (324 aa).

The next 8 helical transmembrane spans lie at 10–30 (MIMT…LTLV), 76–96 (FLFI…WIPL), 107–127 (LGLL…LWSG), 143–163 (VAQT…TIML), 178–198 (PIYL…STLA), 229–249 (LFFL…ITLF), 260–280 (ELFS…FLWV), and 300–320 (FLPL…SYAG).

Belongs to the complex I subunit 1 family.

It is found in the mitochondrion inner membrane. It carries out the reaction a ubiquinone + NADH + 5 H(+)(in) = a ubiquinol + NAD(+) + 4 H(+)(out). Its function is as follows. Core subunit of the mitochondrial membrane respiratory chain NADH dehydrogenase (Complex I) that is believed to belong to the minimal assembly required for catalysis. Complex I functions in the transfer of electrons from NADH to the respiratory chain. The immediate electron acceptor for the enzyme is believed to be ubiquinone. The chain is NADH-ubiquinone oxidoreductase chain 1 (MT-ND1) from Excalfactoria chinensis (Blue-breasted quail).